The sequence spans 240 residues: Uridylate kinase (240 aa).

12-15 contributes to the ATP binding site; the sequence is KLSG. Gly54 contributes to the UMP binding site. Residues Gly55 and Arg59 each contribute to the ATP site. Residues Asp74 and 135 to 142 each bind UMP; that span reads TGNPFFTT. ATP contacts are provided by Thr162, Tyr168, and Asp171.

The protein belongs to the UMP kinase family. As to quaternary structure, homohexamer.

Its subcellular location is the cytoplasm. It carries out the reaction UMP + ATP = UDP + ADP. Its pathway is pyrimidine metabolism; CTP biosynthesis via de novo pathway; UDP from UMP (UMPK route): step 1/1. Inhibited by UTP. Functionally, catalyzes the reversible phosphorylation of UMP to UDP. This Xanthomonas axonopodis pv. citri (strain 306) protein is Uridylate kinase.